The following is a 329-amino-acid chain: Protein mlo2 (329 aa).

The segment at 33–104 adopts a UBR-type zinc-finger fold; the sequence is DTCTYSMGYL…HSIPCNLRKS (72 aa). Residues 120–179 form a PHD-type zinc finger; that stretch reads GRFCICDTVYNPETEEGTMFQCILCEDWFHEKCLQKTNKGIAIPDAETFEWLVCSECSEK.

This sequence belongs to the UBR7 family.

In terms of biological role, not known, interfere with mitotic chromosome segregation when overexpressed. The polypeptide is Protein mlo2 (mlo2) (Schizosaccharomyces pombe (strain 972 / ATCC 24843) (Fission yeast)).